We begin with the raw amino-acid sequence, 330 residues long: DNA-directed RNA polymerase subunit alpha (330 aa).

Positions 1 to 231 are alpha N-terminal domain (alpha-NTD); sequence MQTNLLKPKT…EQLAVFAQLE (231 aa). An alpha C-terminal domain (alpha-CTD) region spans residues 250–330; it reads FDPILLRPVD…NWPPAGLDKR (81 aa).

It belongs to the RNA polymerase alpha chain family. In terms of assembly, homodimer. The RNAP catalytic core consists of 2 alpha, 1 beta, 1 beta' and 1 omega subunit. When a sigma factor is associated with the core the holoenzyme is formed, which can initiate transcription.

It catalyses the reaction RNA(n) + a ribonucleoside 5'-triphosphate = RNA(n+1) + diphosphate. Functionally, DNA-dependent RNA polymerase catalyzes the transcription of DNA into RNA using the four ribonucleoside triphosphates as substrates. The chain is DNA-directed RNA polymerase subunit alpha from Paracidovorax citrulli (strain AAC00-1) (Acidovorax citrulli).